Reading from the N-terminus, the 244-residue chain is Pyridoxal phosphate homeostasis protein (244 aa).

Lysine 37 is subject to N6-(pyridoxal phosphate)lysine.

The protein belongs to the pyridoxal phosphate-binding protein YggS/PROSC family.

In terms of biological role, pyridoxal 5'-phosphate (PLP)-binding protein, which may be involved in intracellular homeostatic regulation of pyridoxal 5'-phosphate (PLP), the active form of vitamin B6. The chain is Pyridoxal phosphate homeostasis protein from Caenorhabditis elegans.